A 140-amino-acid polypeptide reads, in one-letter code: Lysozyme E (140 aa).

Residues 1-18 (MKAFIVLVALAMAAPALG) form the signal peptide. One can recognise a C-type lysozyme domain in the interval 19–140 (RTLDRCSLAR…GWLPSIDGCF (122 aa)). Intrachain disulfides connect cysteine 24–cysteine 139, cysteine 45–cysteine 129, cysteine 80–cysteine 96, and cysteine 92–cysteine 110. Residues glutamate 50 and aspartate 68 contribute to the active site.

The protein belongs to the glycosyl hydrolase 22 family. As to expression, found in the midgut.

It catalyses the reaction Hydrolysis of (1-&gt;4)-beta-linkages between N-acetylmuramic acid and N-acetyl-D-glucosamine residues in a peptidoglycan and between N-acetyl-D-glucosamine residues in chitodextrins.. Its function is as follows. Unlikely to play an active role in the humoral immune defense. May have a function in the digestion of bacteria in the food. The polypeptide is Lysozyme E (LysE) (Drosophila melanogaster (Fruit fly)).